The sequence spans 278 residues: ATPase SWSAP1 (278 aa).

Residues 237–278 (SPEKKDSSAGSQSLTLGCDNLPGPGSPLDGILTSETGADSKT) are disordered. A compositionally biased stretch (polar residues) spans 269–278 (TSETGADSKT).

In terms of assembly, interacts with ZSWIM7; they form a functional complex involved in homologous recombination repair and stabilize each other. Interacts with RAD51, RAD51B, RAD51C, RAD51D and XRCC3; involved in homologous recombination repair.

It is found in the nucleus. Functionally, ATPase which is preferentially stimulated by single-stranded DNA and is involved in homologous recombination repair (HRR). Has a DNA-binding activity which is independent of its ATPase activity. The chain is ATPase SWSAP1 (Swsap1) from Mus musculus (Mouse).